We begin with the raw amino-acid sequence, 289 residues long: Protoheme IX farnesyltransferase 2 (289 aa).

The next 9 membrane-spanning stretches (helical) occupy residues 1 to 21 (MIKP…FLLA), 28 to 48 (LTLM…GCGL), 76 to 96 (YSVL…LAIF), 100 to 120 (IALL…SLYM), 125 to 145 (VYGT…GYCA), 155 to 175 (VILL…IAIF), 199 to 219 (LHIV…PLAG), 221 to 241 (TGIA…GMAL), and 260 to 280 (CSIV…QLVV).

This sequence belongs to the UbiA prenyltransferase family. Protoheme IX farnesyltransferase subfamily.

Its subcellular location is the cell inner membrane. The enzyme catalyses heme b + (2E,6E)-farnesyl diphosphate + H2O = Fe(II)-heme o + diphosphate. Its pathway is porphyrin-containing compound metabolism; heme O biosynthesis; heme O from protoheme: step 1/1. Functionally, converts heme B (protoheme IX) to heme O by substitution of the vinyl group on carbon 2 of heme B porphyrin ring with a hydroxyethyl farnesyl side group. This Shewanella woodyi (strain ATCC 51908 / MS32) protein is Protoheme IX farnesyltransferase 2.